Here is a 421-residue protein sequence, read N- to C-terminus: Gamma-glutamyl phosphate reductase (421 aa).

The protein belongs to the gamma-glutamyl phosphate reductase family.

The protein localises to the cytoplasm. It catalyses the reaction L-glutamate 5-semialdehyde + phosphate + NADP(+) = L-glutamyl 5-phosphate + NADPH + H(+). The protein operates within amino-acid biosynthesis; L-proline biosynthesis; L-glutamate 5-semialdehyde from L-glutamate: step 2/2. In terms of biological role, catalyzes the NADPH-dependent reduction of L-glutamate 5-phosphate into L-glutamate 5-semialdehyde and phosphate. The product spontaneously undergoes cyclization to form 1-pyrroline-5-carboxylate. The sequence is that of Gamma-glutamyl phosphate reductase from Acinetobacter baumannii (strain SDF).